The primary structure comprises 285 residues: Bifunctional protein FolD (285 aa).

Residues 165 to 167 and Ser-190 contribute to the NADP(+) site; that span reads GRS.

The protein belongs to the tetrahydrofolate dehydrogenase/cyclohydrolase family. As to quaternary structure, homodimer.

It catalyses the reaction (6R)-5,10-methylene-5,6,7,8-tetrahydrofolate + NADP(+) = (6R)-5,10-methenyltetrahydrofolate + NADPH. It carries out the reaction (6R)-5,10-methenyltetrahydrofolate + H2O = (6R)-10-formyltetrahydrofolate + H(+). It functions in the pathway one-carbon metabolism; tetrahydrofolate interconversion. Functionally, catalyzes the oxidation of 5,10-methylenetetrahydrofolate to 5,10-methenyltetrahydrofolate and then the hydrolysis of 5,10-methenyltetrahydrofolate to 10-formyltetrahydrofolate. The protein is Bifunctional protein FolD of Burkholderia thailandensis (strain ATCC 700388 / DSM 13276 / CCUG 48851 / CIP 106301 / E264).